Reading from the N-terminus, the 436-residue chain is Transcription factor MYB124 (436 aa).

The span at 1 to 11 shows a compositional bias: basic residues; that stretch reads MEDTKKKKKKN. A disordered region spans residues 1-23; the sequence is MEDTKKKKKKNINNNQDSKKKER. The short motif at 8–15 is the Nuclear localization signal 1 element; sequence KKKNINNN. 2 consecutive HTH myb-type domains span residues 20–71 and 72–126; these read KKER…YTYL and NSDF…KKRA. DNA-binding regions (H-T-H motif) lie at residues 48–71 and 99–122; these read WAIIASKFKDKSTRQCRRRWYTYL and WTEIAKVVSGRTDNAVKNRFTTLC. The Nuclear localization signal 2 motif lies at 151–158; sequence PRKSENET. The disordered stretch occupies residues 309-328; the sequence is SWRQPDLHDSPASSEYSSGS. Residues 319–328 are compositionally biased toward polar residues; it reads PASSEYSSGS.

Interacts with RBR1. Expressed in all shoot organs with higher levels in leaves, stems, flowers, siliques and floral buds. Also detected in roots tips.

Its subcellular location is the nucleus. Its function is as follows. Transcription factor that binds to DNA in promoters cis-regulatory element 5'-GGCGCGC-3' of cell cycle genes, including cyclins, cyclin-dependent kinases (CDKs), and components of the pre-replication complex. Binds to DNA in promoters cis-regulatory element 5'-AGCCG-3' of auxin regulated genes (e.g. PIN3 and PIN7). Together with FAMA and MYB88, ensures that stomata contain just two guard cells (GCs) by enforcing a single symmetric precursor cell division before stomatal maturity. Represses the expression of the mitosis-inducing factors CDKB1-1 and CDKA-1, specifically required for the last guard mother cells (GMC) symmetric divisions in the stomatal pathway. Represses CYCA2-3 in newly formed guard cells. Together with MYB88, regulates stomata spacing by restricting divisions late in the stomatal cell lineage thus limiting the number of GMC divisions. In collaboration with CDKB1-1 and CDKB1-2, restrict the G1/S transition and chloroplast and nuclear number during stomatal formation, and normally maintain fate and developmental progression throughout the stomatal cell lineage. Also involved in the shape regulation of pavement cells. Involved in sensing and/or transducing abiotic stress (e.g. drought and salt), probably via the positive regulation of NAC019. Regulates female reproduction being required for entry into megasporogenesis, probably via the regulation of cell cycle genes. Promotes histone H3K27me3 marks and represses stem cell gene expression. Required for lateral roots (LRs) initiation via the regulation of PIN3 expression in an auxin-dependent manner. Involved in responses to gravity stimulation in primary roots by regulating the transcription of PIN3 and PIN7 in gravity-sensing cells, thus modulating auxin asymmetric redistribution. This is Transcription factor MYB124 from Arabidopsis thaliana (Mouse-ear cress).